The following is a 404-amino-acid chain: Cysteine desulfurase IscS (404 aa).

Pyridoxal 5'-phosphate-binding positions include 75-76 (AT), Asn-155, Gln-183, and 203-205 (SAH). Lys-206 is subject to N6-(pyridoxal phosphate)lysine. Thr-243 is a binding site for pyridoxal 5'-phosphate. Cys-328 serves as the catalytic Cysteine persulfide intermediate. Cys-328 is a binding site for [2Fe-2S] cluster.

It belongs to the class-V pyridoxal-phosphate-dependent aminotransferase family. NifS/IscS subfamily. As to quaternary structure, homodimer. Forms a heterotetramer with IscU, interacts with other sulfur acceptors. The cofactor is pyridoxal 5'-phosphate.

Its subcellular location is the cytoplasm. The catalysed reaction is (sulfur carrier)-H + L-cysteine = (sulfur carrier)-SH + L-alanine. It functions in the pathway cofactor biosynthesis; iron-sulfur cluster biosynthesis. Its function is as follows. Master enzyme that delivers sulfur to a number of partners involved in Fe-S cluster assembly, tRNA modification or cofactor biosynthesis. Catalyzes the removal of elemental sulfur atoms from cysteine to produce alanine. Functions as a sulfur delivery protein for Fe-S cluster synthesis onto IscU, an Fe-S scaffold assembly protein, as well as other S acceptor proteins. The protein is Cysteine desulfurase IscS of Pseudomonas putida (strain GB-1).